The sequence spans 154 residues: 3-dehydroquinate dehydratase (154 aa).

Tyrosine 26 serves as the catalytic Proton acceptor. Substrate-binding residues include asparagine 77, histidine 83, and aspartate 90. Histidine 103 functions as the Proton donor in the catalytic mechanism. Residues 104 to 105 and arginine 114 contribute to the substrate site; that span reads IS.

Belongs to the type-II 3-dehydroquinase family. Homododecamer.

The enzyme catalyses 3-dehydroquinate = 3-dehydroshikimate + H2O. It participates in metabolic intermediate biosynthesis; chorismate biosynthesis; chorismate from D-erythrose 4-phosphate and phosphoenolpyruvate: step 3/7. Its function is as follows. Catalyzes a trans-dehydration via an enolate intermediate. The protein is 3-dehydroquinate dehydratase of Buchnera aphidicola subsp. Baizongia pistaciae (strain Bp).